The sequence spans 265 residues: Thioredoxin-related transmembrane protein 2 homolog (265 aa).

An N-terminal signal peptide occupies residues 1 to 32 (MLIPRLDEVRRALTAFHFFNTLLALAFPVIRS). Topologically, residues 33–96 (TSLCDYVFAV…KIAGMFLFIR (64 aa)) are extracellular. Residues 97–117 (ADILPGIIYILACLIVTVLFP) traverse the membrane as a helical segment. Over 118 to 265 (EPVYNGPEQV…KKGAKAKKED (148 aa)) the chain is Cytoplasmic. Residues 126–230 (QVTYFQGEQL…RPLVNDSRRA (105 aa)) enclose the Thioredoxin domain. The Di-lysine motif signature appears at 262–265 (KKED).

It localises to the membrane. The chain is Thioredoxin-related transmembrane protein 2 homolog from Caenorhabditis elegans.